Reading from the N-terminus, the 266-residue chain is Oxygen-evolving enhancer protein 2-3, chloroplastic (266 aa).

Residues 1–80 (MASTQCFLHH…VGSKVSPADA (80 aa)) constitute a chloroplast transit peptide.

Belongs to the PsbP family.

It is found in the plastid. Its subcellular location is the chloroplast thylakoid membrane. In terms of biological role, may be involved in the regulation of photosystem II. This is Oxygen-evolving enhancer protein 2-3, chloroplastic (PSBP3) from Nicotiana tabacum (Common tobacco).